We begin with the raw amino-acid sequence, 228 residues long: Cytidylate kinase (228 aa).

11–19 contributes to the ATP binding site; that stretch reads GPASAGKST.

This sequence belongs to the cytidylate kinase family. Type 1 subfamily.

Its subcellular location is the cytoplasm. It carries out the reaction CMP + ATP = CDP + ADP. The catalysed reaction is dCMP + ATP = dCDP + ADP. This Limosilactobacillus reuteri (strain DSM 20016) (Lactobacillus reuteri) protein is Cytidylate kinase.